The primary structure comprises 488 residues: Histone deacetylase 2 (488 aa).

A histone deacetylase region spans residues 9-322; that stretch reads KKKVCYYYDG…WTYETAVALD (314 aa). 1D-myo-inositol 1,4,5,6-tetrakisphosphate-binding residues include Gly28 and Lys32. Lys75 is subject to N6-acetyllysine; alternate. A Glycyl lysine isopeptide (Lys-Gly) (interchain with G-Cter in SUMO2); alternate cross-link involves residue Lys75. Residue His142 is part of the active site. Ca(2+) is bound by residues Asp175, Asp177, His179, Phe188, Thr191, Val194, Ser198, and Phe199. Positions 177 and 179 each coordinate Zn(2+). Lys221 bears the N6-acetyllysine mark. Tyr223 is a binding site for Ca(2+). Cys262 carries the post-translational modification S-nitrosocysteine. Asp265 serves as a coordination point for Zn(2+). Residue Arg271 coordinates 1D-myo-inositol 1,4,5,6-tetrakisphosphate. S-nitrosocysteine is present on Cys274. Residues 389–488 form a disordered region; that stretch reads AVHEDSGDED…GTKSEQLSNP (100 aa). A phosphoserine mark is found at Ser394, Ser407, Ser422, and Ser424. A compositionally biased stretch (basic and acidic residues) spans 402 to 417; it reads PDKRISIRASDKRIAC. Positions 418–428 are enriched in acidic residues; it reads DEEFSDSEDEG. A compositionally biased stretch (basic and acidic residues) spans 429–481; it reads EGGRRNVADHKKGAKKARIEEDKKETEDKKTDVKEEDKSKDNSGEKTDTKGTK. Glycyl lysine isopeptide (Lys-Gly) (interchain with G-Cter in SUMO2) cross-links involve residues Lys439, Lys452, Lys458, Lys462, Lys478, and Lys481.

The protein belongs to the histone deacetylase family. HD type 1 subfamily. Part of the core histone deacetylase (HDAC) complex composed of HDAC1, HDAC2, RBBP4 and RBBP7, the core complex associates with SIN3, SAP18 and SAP30 to form the SIN3 HDAC complex. Component of the nucleosome remodeling and deacetylase (NuRD) repressor complex, composed of core proteins MTA1, MTA2, MTA3, RBBP4, RBBP7, HDAC1, HDAC2, MBD2, MBD3, and peripherally associated proteins CDK2AP1, CDK2AP2, GATAD2A, GATAD2B, CHD3, CHD4 and CHD5. The exact stoichiometry of the NuRD complex is unknown, and some subunits such as MBD2 and MBD3, GATAD2A and GATAD2B, and CHD3, CHD4 and CHD5 define mutually exclusive NuRD complexes. Component of a RCOR/GFI/KDM1A/HDAC complex. Component of a BHC histone deacetylase complex that contains HDAC1, HDAC2, HMG20B, KDM1A, RCOR1 and PHF21A. The BHC complex may also contain ZMYM2, ZNF217, ZMYM3, GSE1 and GTF2I. Part of a complex containing the core histones H2A, H2B, H3 and H4, DEK and unphosphorylated DAXX. Part of a complex containing ATR and CHD4. Forms a heterologous complex at least with YY1. Interacts in the late S-phase of DNA-replication with DNMT1 in the other transcriptional repressor complex composed of DNMT1, DMAP1, PCNA, CAF1. Component of a mSin3A corepressor complex that contains SIN3A, SAP130, SUDS3, ARID4B, HDAC1 and HDAC2. Part of a complex composed of TRIM28, HDAC1, HDAC2 and EHMT2. Part of a complex containing at least CDYL, MIER1, MIER2, HDAC1 and HDAC2. Component of a histone deacetylase complex containing DNTTIP1, ZNF541, HDAC1 and HDAC2. Forms a complex comprising APPL1, RUVBL2, APPL2, CTNNB1 and HDAC1. Interacts directly with GFI1. Interacts directly with GFI1B. Interacts with APEX1; the interaction is not dependent on the acetylated status of APEX1. Interacts with ATR. Interacts with BCL6 (non-acetylated form). Interacts with BEND3. Interacts with CBFA2T3. Interacts with CDK2AP1. Interacts with CHD4. Interacts with CHD5. Interacts with CHFR. Interacts with CRY1. Interacts with DNMT1. Interacts with GATAD2A. Interacts with HCFC1. Interacts with HDAC7. Interacts with HDAC10. Interacts with INSM1. Interacts with KDM4A. Interacts with MACROH2A1 (via the non-histone region). Interacts with MBD3L2. Interacts with MTA1, with a preference for sumoylated MTA1. Interacts with NACC2. Interacts with NRIP1. Interacts with PELP1. Interacts with PIMREG. Interacts with PRDM6. Interacts with PWWP2B. Interacts with SAP30. Interacts with SAP30L. Interacts with SETDB1. Interacts with SIX3. Interacts with SMARCAD1. Interacts with SNW1. Interacts with SPHK2. Interacts with SPEN/MINT. Interacts (CK2 phosphorylated form) with SP3. Interacts with SUV39H1. Interacts with TSHZ3 (via its N-terminus). Interacts with ZMYND8. Interacts with ZNF431. Interacts with ZNF263; recruited to the SIX3 promoter along with other proteins involved in chromatin modification and transcriptional corepression where it contributes to transcriptional repression. Identified in a complex with HDAC1, KCTD19, DNTTIP1 and ZNF541. Component of the SIN3B complex, which includes SIN3B, HDAC2, PHF12 and MORF4L1; interacts directly with all subunits. Zn(2+) serves as cofactor. The cofactor is Ca(2+). Post-translationally, S-nitrosylated by GAPDH. In neurons, S-nitrosylation at Cys-262 and Cys-274 does not affect enzyme activity, but induces HDAC2 release from chromatin. This in turn increases acetylation of histones surrounding neurotrophin-dependent gene promoters and promotes their transcription. In embryonic cortical neurons, S-Nitrosylation regulates dendritic growth and branching. Widely expressed; lower levels in brain and lung.

Its subcellular location is the nucleus. The protein localises to the cytoplasm. It carries out the reaction N(6)-acetyl-L-lysyl-[histone] + H2O = L-lysyl-[histone] + acetate. The catalysed reaction is N(6)-acetyl-L-lysyl-[protein] + H2O = L-lysyl-[protein] + acetate. It catalyses the reaction N(6)-(2E)-butenoyl-L-lysyl-[protein] + H2O = (2E)-2-butenoate + L-lysyl-[protein]. The enzyme catalyses N(6)-(2-hydroxyisobutanoyl)-L-lysyl-[protein] + H2O = 2-hydroxy-2-methylpropanoate + L-lysyl-[protein]. It carries out the reaction N(6)-[(S)-lactoyl]-L-lysyl-[protein] + H2O = (S)-lactate + L-lysyl-[protein]. Inositol tetraphosphate (1D-myo-inositol 1,4,5,6-tetrakisphosphate) may act as an intermolecular glue between HDAC2 and N-Cor repressor complex components. Its function is as follows. Histone deacetylase that catalyzes the deacetylation of lysine residues on the N-terminal part of the core histones (H2A, H2B, H3 and H4). Histone deacetylation gives a tag for epigenetic repression and plays an important role in transcriptional regulation, cell cycle progression and developmental events. Histone deacetylases act via the formation of large multiprotein complexes. Forms transcriptional repressor complexes by associating with MAD, SIN3, YY1 and N-COR. Component of a RCOR/GFI/KDM1A/HDAC complex that suppresses, via histone deacetylase (HDAC) recruitment, a number of genes implicated in multilineage blood cell development. Acts as a component of the histone deacetylase NuRD complex which participates in the remodeling of chromatin. Component of the SIN3B complex that represses transcription and counteracts the histone acetyltransferase activity of EP300 through the recognition H3K27ac marks by PHF12 and the activity of the histone deacetylase HDAC2. Also deacetylates non-histone targets: deacetylates TSHZ3, thereby regulating its transcriptional repressor activity. May be involved in the transcriptional repression of circadian target genes, such as PER1, mediated by CRY1 through histone deacetylation. Involved in MTA1-mediated transcriptional corepression of TFF1 and CDKN1A. In addition to protein deacetylase activity, also acts as a protein-lysine deacylase by recognizing other acyl groups: catalyzes removal of (2E)-butenoyl (crotonyl), lactoyl (lactyl) and 2-hydroxyisobutanoyl (2-hydroxyisobutyryl) acyl groups from lysine residues, leading to protein decrotonylation, delactylation and de-2-hydroxyisobutyrylation, respectively. This is Histone deacetylase 2 from Homo sapiens (Human).